The following is a 430-amino-acid chain: Crotonyl-CoA carboxylase/reductase (430 aa).

This sequence belongs to the zinc-containing alcohol dehydrogenase family. Crotonyl-CoA carboxylase/reductase subfamily. As to quaternary structure, homodimer. Despite some sequence similarity to zinc-containing alcohol dehydrogenases, this enzyme does not bind any metals. serves as cofactor.

The enzyme catalyses (2S)-ethylmalonyl-CoA + NADP(+) = (2E)-butenoyl-CoA + CO2 + NADPH. The catalysed reaction is (S)-methylmalonyl-CoA + NADP(+) = acryloyl-CoA + CO2 + NADPH. It catalyses the reaction butanoyl-CoA + NADP(+) = (2E)-butenoyl-CoA + NADPH + H(+). Its function is as follows. Catalyzes the NADPH-dependent reductive carboxylation of crotonyl-CoA ((2E)-butenoyl-CoA) to (2S)-ethylmalonyl-CoA, in the presence of CO2. This is a key reaction in the ethylmalonyl-CoA pathway for acetyl-CoA assimilation required for R.sphaeroides growth on acetate as sole carbon source. Is also able to accept acryloyl-CoA as an alternative substrate, yielding (2S)-methylmalonyl-CoA. To a lesser extent, when CO2 is absent, the enzyme also catalyzes the reduction of crotonyl-CoA to butanoyl-CoA. The sequence is that of Crotonyl-CoA carboxylase/reductase from Cereibacter sphaeroides (strain ATCC 17023 / DSM 158 / JCM 6121 / CCUG 31486 / LMG 2827 / NBRC 12203 / NCIMB 8253 / ATH 2.4.1.) (Rhodobacter sphaeroides).